The chain runs to 278 residues: Large ribosomal subunit protein uL2 (278 aa).

A disordered region spans residues 222 to 278 (GVVMNPIDHPHGGGEGRTSGGRHPVTPWGKPTKGKKTRSNKSTDKFILISRHKRKKK).

This sequence belongs to the universal ribosomal protein uL2 family. As to quaternary structure, part of the 50S ribosomal subunit. Forms a bridge to the 30S subunit in the 70S ribosome.

One of the primary rRNA binding proteins. Required for association of the 30S and 50S subunits to form the 70S ribosome, for tRNA binding and peptide bond formation. It has been suggested to have peptidyltransferase activity; this is somewhat controversial. Makes several contacts with the 16S rRNA in the 70S ribosome. This chain is Large ribosomal subunit protein uL2, found in Rhodopseudomonas palustris (strain ATCC BAA-98 / CGA009).